Here is a 608-residue protein sequence, read N- to C-terminus: Threonine--tRNA ligase (608 aa).

Positions 1 to 143 (MRVLYIHAER…SFKPEEGRAD (143 aa)) are editing domain. 2 catalytic regions span residues 194 to 490 (PKYL…PRLP) and 195 to 490 (KYLE…PRLP). Residues Cys287, His338, and His459 each coordinate Zn(2+).

Belongs to the class-II aminoacyl-tRNA synthetase family. Homodimer. Requires Zn(2+) as cofactor.

It is found in the cytoplasm. The enzyme catalyses tRNA(Thr) + L-threonine + ATP = L-threonyl-tRNA(Thr) + AMP + diphosphate + H(+). Its function is as follows. Catalyzes the attachment of threonine to tRNA(Thr) in a two-step reaction: L-threonine is first activated by ATP to form Thr-AMP and then transferred to the acceptor end of tRNA(Thr). Also edits incorrectly charged L-seryl-tRNA(Thr). The sequence is that of Threonine--tRNA ligase from Pyrobaculum aerophilum (strain ATCC 51768 / DSM 7523 / JCM 9630 / CIP 104966 / NBRC 100827 / IM2).